The chain runs to 1442 residues: Clustered mitochondria protein homolog (1442 aa).

2 disordered regions span residues N38–D100 and G237–P258. Basic and acidic residues predominate over residues S82–D100. The 243-residue stretch at R394–L636 folds into the Clu domain. Basic and acidic residues-rich tracts occupy residues Q696–A714 and E737–T763. 2 disordered regions span residues Q696 to T763 and S949 to C984. Positions S949 to G958 are enriched in polar residues. TPR repeat units lie at residues A1087–V1120, A1213–Y1246, and G1248–T1281. The segment at R1373–S1442 is disordered. The segment covering S1380–Q1390 has biased composition (low complexity). Over residues A1424 to S1442 the composition is skewed to polar residues.

It belongs to the CLU family.

It is found in the cytoplasm. In terms of biological role, mRNA-binding protein involved in proper cytoplasmic distribution of mitochondria. This is Clustered mitochondria protein homolog from Aedes aegypti (Yellowfever mosquito).